We begin with the raw amino-acid sequence, 269 residues long: 5'-nucleotidase SurE (269 aa).

Residues D11, D12, S43, and N101 each contribute to the a divalent metal cation site.

It belongs to the SurE nucleotidase family. A divalent metal cation is required as a cofactor.

The protein localises to the cytoplasm. The enzyme catalyses a ribonucleoside 5'-phosphate + H2O = a ribonucleoside + phosphate. Functionally, nucleotidase that shows phosphatase activity on nucleoside 5'-monophosphates. This is 5'-nucleotidase SurE from Prochlorococcus marinus (strain AS9601).